The following is a 542-amino-acid chain: uncharacterized protein (542 aa).

A run of 12 helical transmembrane segments spans residues 12-32, 57-77, 94-114, 123-143, 168-188, 191-211, 216-236, 243-263, 277-297, 313-333, 358-378, and 391-411; these read LVFG…GTVL, FGDV…AILY, VIVM…SWTA, AAAV…AGLA, LFAV…AALV, FVVS…LVTL, IDAP…AFLL, SGVV…PTVI, IATF…IPGA, VLAL…VQAT, VTSW…AVPM, and LIIF…GTSL.

This sequence belongs to the monovalent cation:proton antiporter 1 (CPA1) transporter (TC 2.A.36) family.

It localises to the cell membrane. This is an uncharacterized protein from Mycobacterium bovis (strain ATCC BAA-935 / AF2122/97).